Consider the following 254-residue polypeptide: Type III pantothenate kinase (254 aa).

Residue 6–13 (DVGNTNTV) coordinates ATP. Substrate-binding positions include Tyr-100 and 107–110 (GADR). Catalysis depends on Asp-109, which acts as the Proton acceptor. Asp-129 is a binding site for K(+). An ATP-binding site is contributed by Thr-132. Thr-184 contributes to the substrate binding site.

Belongs to the type III pantothenate kinase family. Homodimer. It depends on NH4(+) as a cofactor. Requires K(+) as cofactor.

It localises to the cytoplasm. The enzyme catalyses (R)-pantothenate + ATP = (R)-4'-phosphopantothenate + ADP + H(+). The protein operates within cofactor biosynthesis; coenzyme A biosynthesis; CoA from (R)-pantothenate: step 1/5. Its function is as follows. Catalyzes the phosphorylation of pantothenate (Pan), the first step in CoA biosynthesis. The polypeptide is Type III pantothenate kinase (Syntrophus aciditrophicus (strain SB)).